Reading from the N-terminus, the 406-residue chain is MTLDVGPEDELPDWAAAKEFYQKYDPKDVIGRGVSSVVRRCVHRATGQEFAVKIMEVTAERLSPEQLEEVREATRRETHILRQVAGHPHIITLIDSYESSSFMFLVFDLMRKGELFDYLTEKVALSEKETRSIMRSLLEAVSFLHNNNIVHRDLKPENILLDDNMQIRLSDFGFSCHLEPGEKLRELCGTPGYLAPEILKCSMDETHPGYGKEVDLWACGVILFTLLAGSPPFWHRRQILMLRMIMEGQYQFSSPEWDDRSDTVKDLISRLLQVDPVERLTAEQALQHPFFERCEGSQAWNLTPRQRFRVAVWTVLAAGRVALSAHRIRPLTKSALLRDPYALRPVRRLIDNCAFRLYGHWVKKGEQQNRAALFQHRPPGPFPMMGPEEEGDSATIAEDEAMLVLG.

Positions 24–291 constitute a Protein kinase domain; that stretch reads YDPKDVIGRG…AEQALQHPFF (268 aa). ATP-binding positions include 30-38 and lysine 53; that span reads IGRGVSSVV. Aspartate 153 (proton acceptor) is an active-site residue. Residues 306 to 330 form a calmodulin-binding (domain-N) region; sequence QRFRVAVWTVLAAGRVALSAHRIRP. Residues 346 to 370 form a calmodulin-binding (domain-C) region; the sequence is VRRLIDNCAFRLYGHWVKKGEQQNR.

This sequence belongs to the protein kinase superfamily. CAMK Ser/Thr protein kinase family. Hexadecamer of 4 heterotetramers, each composed of alpha, beta, gamma, and delta subunits. Alpha (PHKA1 or PHKA2) and beta (PHKB) are regulatory subunits, gamma (PHKG1 or PHKG2) is the catalytic subunit, and delta is calmodulin.

It carries out the reaction 2 ATP + phosphorylase b = 2 ADP + phosphorylase a.. Catalytic subunit of the phosphorylase b kinase (PHK), which mediates the neural and hormonal regulation of glycogen breakdown (glycogenolysis) by phosphorylating and thereby activating glycogen phosphorylase. May regulate glycogeneolysis in the testis. In vitro, phosphorylates PYGM. The polypeptide is Phosphorylase b kinase gamma catalytic chain, liver/testis isoform (PHKG2) (Bos taurus (Bovine)).